The chain runs to 187 residues: UPF0340 protein SPD_0576 (187 aa).

Belongs to the UPF0340 family.

This Streptococcus pneumoniae serotype 2 (strain D39 / NCTC 7466) protein is UPF0340 protein SPD_0576.